The primary structure comprises 388 residues: MKHLHRFFSSDASGGIILIIAAVLAMIMANSGATSGWYHDFLETPVQLRVGTLEINKNMLLWINDALMAVFFLLVGLEVKRELMQGSLASLRQAAFPVIAAIGGMIVPALLYLAFNYADPITREGWAIPAATDIAFALGVLALLGSRVPLALKIFLMALAIIDDLGAIIIIALFYTNDLSMASLGVAAVAIAVLAVLNLCGVRRTGVYILVGVVLWTAVLKSGVHATLAGVIVGFFIPLKEKHGRSPAKRLEHVLHPWVAYLILPLFAFANAGVSLQGVTLEGLTSILPLGIIAGLLIGKPLGISLFCWLALRLKLAHLPEGTTYQQIMAVGILCGIGFTMSIFIASLAFGSVDPELINWAKLGILVGSISSAVIGYSWLRVRLRPSV.

Residues Met1 to Asp11 lie on the Cytoplasmic side of the membrane. A helical transmembrane segment spans residues Ala12 to Ser31. At Gly32–Asn58 the chain is on the periplasmic side. Residues Met59–Lys80 form a helical membrane-spanning segment. The Cytoplasmic segment spans residues Arg81–Phe96. Residues Pro97–Asn116 traverse the membrane as a helical segment. Residues Tyr117–Thr122 are Periplasmic-facing. A helical membrane pass occupies residues Arg123–Ala130. Over Ala131–Ile154 the chain is Cytoplasmic. The helical transmembrane segment at Phe155–Thr176 threads the bilayer. The Periplasmic portion of the chain corresponds to Asn177–Ser180. A helical membrane pass occupies residues Met181–Cys200. At Gly201–Arg204 the chain is on the cytoplasmic side. The chain crosses the membrane as a helical span at residues Thr205–Ser222. Gly223 is a topological domain (periplasmic). The chain crosses the membrane as a helical span at residues Val224–Phe236. Residues Ile237 to His253 lie on the Cytoplasmic side of the membrane. A helical transmembrane segment spans residues Val254–Ala272. Topologically, residues Gly273–Ser286 are periplasmic. Residues Ile287 to Leu310 form a helical membrane-spanning segment. The Cytoplasmic segment spans residues Ala311–Phe339. Residues Thr340 to Phe350 traverse the membrane as a helical segment. At Gly351–Leu357 the chain is on the periplasmic side. The helical transmembrane segment at Ile358–Leu380 threads the bilayer. Over Arg381–Val388 the chain is Cytoplasmic.

This sequence belongs to the NhaA Na(+)/H(+) (TC 2.A.33) antiporter family.

It localises to the cell inner membrane. It carries out the reaction Na(+)(in) + 2 H(+)(out) = Na(+)(out) + 2 H(+)(in). Na(+)/H(+) antiporter that extrudes sodium in exchange for external protons. The sequence is that of Na(+)/H(+) antiporter NhaA from Escherichia coli O6:K15:H31 (strain 536 / UPEC).